The primary structure comprises 828 residues: Glycerol-3-phosphate acyltransferase 1, mitochondrial (828 aa).

The Cytoplasmic portion of the chain corresponds to 1-87 (MDESALTLGT…FFNPSIPSLG (87 aa)). Residues 80–120 (NPSIPSLGLRNVIYINETHTRHRGWLARRLSYVLFIQERDV) form an important for mitochondrial localization region. Residues 88 to 118 (LRNVIYINETHTRHRGWLARRLSYVLFIQER) lie within the membrane without spanning it. At 119–828 (DVHKGMFATN…LEYILSFVVL (710 aa)) the chain is on the cytoplasmic side. Positions 230 to 235 (HRSHID) match the HXXXXD motif motif. Positions 278, 279, 288, 293, and 328 each coordinate CoA. S380 carries the post-translational modification Phosphoserine. A disordered region spans residues 435-455 (SRPSDAADEGRDTSINESRNA). Positions 442-455 (DEGRDTSINESRNA) are enriched in basic and acidic residues. R462 contributes to the CoA binding site. A phosphoserine mark is found at S688 and S695. Residues K780 and K784 each carry the N6-acetyllysine modification.

The protein belongs to the GPAT/DAPAT family.

It localises to the mitochondrion outer membrane. The enzyme catalyses sn-glycerol 3-phosphate + an acyl-CoA = a 1-acyl-sn-glycero-3-phosphate + CoA. The catalysed reaction is (9Z,12Z)-octadecadienoyl-CoA + sn-glycerol 3-phosphate = 1-(9Z,12Z)-octadecadienoyl-sn-glycero-3-phosphate + CoA. It catalyses the reaction sn-glycerol 3-phosphate + (9Z)-octadecenoyl-CoA = 1-(9Z-octadecenoyl)-sn-glycero-3-phosphate + CoA. It carries out the reaction sn-glycerol 3-phosphate + octadecanoyl-CoA = 1-octadecanoyl-sn-glycero-3-phosphate + CoA. The enzyme catalyses sn-glycerol 3-phosphate + hexadecanoyl-CoA = 1-hexadecanoyl-sn-glycero-3-phosphate + CoA. The catalysed reaction is dodecanoyl-CoA + sn-glycerol 3-phosphate = 1-dodecanoyl-sn-glycerol 3-phosphate + CoA. It catalyses the reaction 1-acyl-sn-glycero-3-phospho-(1'-sn-glycerol) + an acyl-CoA = a 1,2-diacyl-sn-glycero-3-phospho-(1'-sn-glycerol) + CoA. It functions in the pathway phospholipid metabolism; CDP-diacylglycerol biosynthesis; CDP-diacylglycerol from sn-glycerol 3-phosphate: step 1/3. In terms of biological role, mitochondrial membrane protein that catalyzes the essential first step of biosynthesis of glycerolipids such as triglycerides, phosphatidic acids and lysophosphatidic acids. Esterifies acyl-group from acyl-coenzyme A (acyl-CoA) to the sn-1 position of glycerol-3-phosphate, to produce lysophosphatidic acid. Has a narrow hydrophobic binding cleft that selects for a linear acyl chain. Catalytic activity is higher for substrates with a 16-carbon acyl chain. The polypeptide is Glycerol-3-phosphate acyltransferase 1, mitochondrial (Homo sapiens (Human)).